The chain runs to 166 residues: NAD(P)H-quinone oxidoreductase subunit I, chloroplastic (166 aa).

4Fe-4S ferredoxin-type domains follow at residues 55–84 and 95–124; these read GRIH…VDWK and LNYS…MTEE. Positions 64, 67, 70, 74, 104, 107, 110, and 114 each coordinate [4Fe-4S] cluster.

Belongs to the complex I 23 kDa subunit family. In terms of assembly, NDH is composed of at least 16 different subunits, 5 of which are encoded in the nucleus. [4Fe-4S] cluster is required as a cofactor.

It is found in the plastid. The protein resides in the chloroplast thylakoid membrane. The enzyme catalyses a plastoquinone + NADH + (n+1) H(+)(in) = a plastoquinol + NAD(+) + n H(+)(out). It carries out the reaction a plastoquinone + NADPH + (n+1) H(+)(in) = a plastoquinol + NADP(+) + n H(+)(out). Functionally, NDH shuttles electrons from NAD(P)H:plastoquinone, via FMN and iron-sulfur (Fe-S) centers, to quinones in the photosynthetic chain and possibly in a chloroplast respiratory chain. The immediate electron acceptor for the enzyme in this species is believed to be plastoquinone. Couples the redox reaction to proton translocation, and thus conserves the redox energy in a proton gradient. The protein is NAD(P)H-quinone oxidoreductase subunit I, chloroplastic of Chamaechaenactis scaposa (Fullstem).